A 251-amino-acid polypeptide reads, in one-letter code: Chloride intracellular channel protein 5 (251 aa).

The required for insertion into the membrane stretch occupies residues 1 to 98; that stretch reads MTDSATANGD…EEFLEETLTP (98 aa). Positions 32–35 match the G-site motif; that stretch reads CPFS. Residues 34-54 form a helical membrane-spanning segment; that stretch reads FSQRLFMILWLKGVVFNVTTV. The GST C-terminal domain occupies 101–241; the sequence is YPKLAARHRE…AADSEIELAY (141 aa).

It belongs to the chloride channel CLIC family. As to quaternary structure, component of a multimeric complex consisting of several cytoskeletal proteins, including actin, ezrin, alpha-actinin, gelsolin, and IQGAP1. Interacts with AKAP9. Interacts with TPRN. TPRN, CLIC5 and PTPQR form concentric rings at the base of stereocilia and may form a complex. Interacts with EZR, MYO6 and RDX; the proteins may work together as a complex to stabilize linkages between the plasma membrane and subjacent actin cytoskeleton at the stereocilium base. As to expression, detected in cochlea, in cochlear and vestibular hair cell bundles in the organ of Corti (at protein level). Expressed neonatal and adult cardiomyocytes (at protein level).

Its subcellular location is the golgi apparatus. The protein localises to the cytoplasm. It is found in the cytoskeleton. The protein resides in the microtubule organizing center. It localises to the centrosome. Its subcellular location is the cell cortex. The protein localises to the membrane. It is found in the apical cell membrane. The protein resides in the mitochondrion. It localises to the cell projection. Its subcellular location is the stereocilium. The enzyme catalyses Na(+)(in) = Na(+)(out). It catalyses the reaction K(+)(in) = K(+)(out). It carries out the reaction chloride(in) = chloride(out). With respect to regulation, inhibited by F-actin. In the soluble state, catalyzes glutaredoxin-like thiol disulfide exchange reactions with reduced glutathione as electron donor. Can insert into membranes and form non-selective ion channels almost equally permeable to Na(+), K(+) and Cl(-). Required for normal hearing. It is necessary for the formation of stereocilia in the inner ear and normal development of the organ of Corti. May play a role in the regulation of transepithelial ion absorption and secretion. Is required for the development and/or maintenance of the proper glomerular endothelial cell and podocyte architecture. Plays a role in formation of the lens suture in the eye, which is important for normal optical properties of the lens. The sequence is that of Chloride intracellular channel protein 5 (Clic5) from Rattus norvegicus (Rat).